The sequence spans 543 residues: Phenylalanine--tRNA ligase beta subunit (543 aa).

The B5 domain maps to 269-344 (FDFRIMRPAR…KSKGIENIEE (76 aa)). Aspartate 322, aspartate 328, glutamate 331, and aspartate 332 together coordinate Mg(2+).

Belongs to the phenylalanyl-tRNA synthetase beta subunit family. Type 2 subfamily. In terms of assembly, tetramer of two alpha and two beta subunits. Mg(2+) serves as cofactor.

It localises to the cytoplasm. The catalysed reaction is tRNA(Phe) + L-phenylalanine + ATP = L-phenylalanyl-tRNA(Phe) + AMP + diphosphate + H(+). This is Phenylalanine--tRNA ligase beta subunit from Thermoplasma acidophilum (strain ATCC 25905 / DSM 1728 / JCM 9062 / NBRC 15155 / AMRC-C165).